Here is a 512-residue protein sequence, read N- to C-terminus: ATP synthase subunit alpha (512 aa).

Glycine 169–threonine 176 contacts ATP.

This sequence belongs to the ATPase alpha/beta chains family. As to quaternary structure, F-type ATPases have 2 components, CF(1) - the catalytic core - and CF(0) - the membrane proton channel. CF(1) has five subunits: alpha(3), beta(3), gamma(1), delta(1), epsilon(1). CF(0) has three main subunits: a(1), b(2) and c(9-12). The alpha and beta chains form an alternating ring which encloses part of the gamma chain. CF(1) is attached to CF(0) by a central stalk formed by the gamma and epsilon chains, while a peripheral stalk is formed by the delta and b chains.

The protein resides in the cell inner membrane. The catalysed reaction is ATP + H2O + 4 H(+)(in) = ADP + phosphate + 5 H(+)(out). Functionally, produces ATP from ADP in the presence of a proton gradient across the membrane. The alpha chain is a regulatory subunit. The polypeptide is ATP synthase subunit alpha (Dechloromonas aromatica (strain RCB)).